We begin with the raw amino-acid sequence, 408 residues long: Probable pectate lyase 5 (408 aa).

Positions 1–27 (MRMTLVHLSLSLFSCLLLVLSPTFIAS) are cleaved as a signal peptide. Asn-45 carries an N-linked (GlcNAc...) asparagine glycan. 3 residues coordinate Ca(2+): Asp-206, Asp-230, and Asp-234. Arg-286 is an active-site residue.

It belongs to the polysaccharide lyase 1 family. Ca(2+) serves as cofactor.

The enzyme catalyses Eliminative cleavage of (1-&gt;4)-alpha-D-galacturonan to give oligosaccharides with 4-deoxy-alpha-D-galact-4-enuronosyl groups at their non-reducing ends.. It functions in the pathway glycan metabolism; pectin degradation; 2-dehydro-3-deoxy-D-gluconate from pectin: step 2/5. In Arabidopsis thaliana (Mouse-ear cress), this protein is Probable pectate lyase 5.